A 444-amino-acid polypeptide reads, in one-letter code: Phosphoglucosamine mutase (444 aa).

Ser-102 acts as the Phosphoserine intermediate in catalysis. 4 residues coordinate Mg(2+): Ser-102, Asp-241, Asp-243, and Asp-245. The residue at position 102 (Ser-102) is a Phosphoserine.

It belongs to the phosphohexose mutase family. Mg(2+) serves as cofactor. Activated by phosphorylation.

It catalyses the reaction alpha-D-glucosamine 1-phosphate = D-glucosamine 6-phosphate. Functionally, catalyzes the conversion of glucosamine-6-phosphate to glucosamine-1-phosphate. The protein is Phosphoglucosamine mutase of Actinobacillus succinogenes (strain ATCC 55618 / DSM 22257 / CCUG 43843 / 130Z).